A 62-amino-acid polypeptide reads, in one-letter code: Small ribosomal subunit protein eS17 (62 aa).

It belongs to the eukaryotic ribosomal protein eS17 family.

The chain is Small ribosomal subunit protein eS17 from Methanocaldococcus jannaschii (strain ATCC 43067 / DSM 2661 / JAL-1 / JCM 10045 / NBRC 100440) (Methanococcus jannaschii).